Consider the following 693-residue polypeptide: Glycine--tRNA ligase beta subunit (693 aa).

It belongs to the class-II aminoacyl-tRNA synthetase family. Tetramer of two alpha and two beta subunits.

Its subcellular location is the cytoplasm. It catalyses the reaction tRNA(Gly) + glycine + ATP = glycyl-tRNA(Gly) + AMP + diphosphate. The protein is Glycine--tRNA ligase beta subunit of Natranaerobius thermophilus (strain ATCC BAA-1301 / DSM 18059 / JW/NM-WN-LF).